The sequence spans 1453 residues: Chromatin remodeling regulator CECR2 (1453 aa).

The disordered stretch occupies residues 170–237 (VQGRSNGELS…DLQTRNGSRG (68 aa)). The segment covering 197–209 (TGKRRGRPPKRKK) has biased composition (basic residues). Basic and acidic residues predominate over residues 210-222 (LQEEIISSEKQEE). Positions 223 to 234 (NSLTSDLQTRNG) are enriched in polar residues. Serine 402 carries the phosphoserine modification. Positions 414 to 518 (FELDDDFTAM…RCFHRAMTKH (105 aa)) constitute a Bromo domain. Phosphothreonine is present on threonine 526. 8 disordered regions span residues 536–667 (EKRE…HPPF), 767–796 (HGTTNPGRLGPDEKPHLGPGPSHHPHTLGH), 827–868 (GYMQ…GESM), 884–1020 (VCPP…DNSY), 1046–1072 (VVGEASPCRSEGKGLDGSGSEKPLCPR), 1131–1308 (LASM…YLYG), 1331–1368 (MLQTGSPYTPQRSASHFQPRAYPSPVPAHPPPHPVATQ), and 1396–1453 (QTGT…LDQS). A Phosphoserine modification is found at serine 551. The segment covering 637 to 649 (GSLQGSDPTNLHG) has biased composition (polar residues). A compositionally biased stretch (pro residues) spans 655–664 (EAPPGEPLQH). Residues 887–905 (PGVPYHPRQPTPPQLPGPF) are compositionally biased toward pro residues. Serine 983 carries the post-translational modification Phosphoserine. Residues 985-998 (QERETEDSQLKSDA) show a composition bias toward basic and acidic residues. The span at 999–1020 (SDSADTYKTSKNKNTWPLDNSY) shows a compositional bias: polar residues. Asymmetric dimethylarginine occurs at positions 1166 and 1172. Composition is skewed to low complexity over residues 1173–1187 (YSYQPPSQPSYHPYQ) and 1202–1211 (QRSLPSQRSP). A compositionally biased stretch (polar residues) spans 1228–1250 (NVLSSLQGCETLNTALTSPTQMD). A compositionally biased stretch (basic and acidic residues) spans 1265 to 1289 (GPEEEKMDESVERPESPKEFLDLDN). Serine 1280 carries the phosphoserine modification. 2 stretches are compositionally biased toward polar residues: residues 1291–1304 (NAATKRQNSLSTSD) and 1331–1346 (MLQTGSPYTPQRSASH). A compositionally biased stretch (pro residues) spans 1352 to 1364 (YPSPVPAHPPPHP).

As to quaternary structure, component of the CERF-1 ISWI chromatin remodeling complex (also called the CECR2-containing remodeling factor (CERF) complex) at least composed of CECR2 and SMARCA1. Component of the CERF-5 ISWI chromatin remodeling complex at least composed of CECR2 and SMARCA5/SNF2H. LUZP1 is detected as part of the CERF-1 and CERF-5 complexes in embryonic stem (ES) cells where it is involved in complex stabilization but is not detected in the complexes in the testis. Interacts with CCAR2; CCAR2 may form part of the CERF-1 and/or CEF-5 ISWI chromatin remodeling complexes in ES cells. Interacts with acetylated lysine residues on histone H2A and H3 (in vitro). Interacts with LRPPRC.

Its subcellular location is the nucleus. Functionally, regulatory subunit of the ATP-dependent CERF-1 and CERF-5 ISWI chromatin remodeling complexes, which form ordered nucleosome arrays on chromatin and facilitate access to DNA during DNA-templated processes such as DNA replication, transcription, and repair. The complexes do not have the ability to slide mononucleosomes to the center of a DNA template. The CERF-1 ISWI chromatin remodeling complex has a lower ATP hydrolysis rate than the CERF-5 ISWI chromatin remodeling complex. Plays a role in various processes during development: required during embryogenesis for neural tube closure and inner ear development. In adults, required for spermatogenesis, via the formation of ISWI-type chromatin complexes. In histone-modifying complexes, CECR2 recognizes and binds acylated histones: binds histones that are acetylated and/or butyrylated. May also be involved through its interaction with LRPPRC in the integration of cytoskeletal network with vesicular trafficking, nucleocytosolic shuttling, transcription, chromosome remodeling and cytokinesis. The polypeptide is Chromatin remodeling regulator CECR2 (Mus musculus (Mouse)).